Here is a 197-residue protein sequence, read N- to C-terminus: Small ribosomal subunit protein uS4B (197 aa).

The region spanning 88–151 is the S4 RNA-binding domain; that stretch reads CRLDNIAYRI…RKNDEFADNF (64 aa).

The protein belongs to the universal ribosomal protein uS4 family. In terms of assembly, part of the 30S ribosomal subunit. Contacts protein S5. The interaction surface between S4 and S5 is involved in control of translational fidelity.

In terms of biological role, one of the primary rRNA binding proteins, it binds directly to 16S rRNA where it nucleates assembly of the body of the 30S subunit. Functionally, with S5 and S12 plays an important role in translational accuracy. This is Small ribosomal subunit protein uS4B from Clostridium botulinum (strain Hall / ATCC 3502 / NCTC 13319 / Type A).